Here is a 359-residue protein sequence, read N- to C-terminus: Cytohesin-interacting protein (359 aa).

A PDZ domain is found at 77 to 166 (LVTVEKQDNE…LLTIETLNGT (90 aa)). Residues 166-188 (TMILKRTELEAKLQVLKQTLKQK) form an interaction with CYTH1 region. The stretch at 166-188 (TMILKRTELEAKLQVLKQTLKQK) forms a coiled coil.

Interacts with CYTH1 and SNX27. Expressed in lymph nodes, thymus, spleen, lung, peripheral blood leukocytes and bone marrow.

The protein resides in the cytoplasm. The protein localises to the early endosome. Its function is as follows. By its binding to cytohesin-1 (CYTH1), it modifies activation of ARFs by CYTH1 and its precise function may be to sequester CYTH1 in the cytoplasm. In Homo sapiens (Human), this protein is Cytohesin-interacting protein (CYTIP).